A 356-amino-acid chain; its full sequence is Tyrosine recombinase XerS (356 aa).

The Core-binding (CB) domain maps to 16–121 (IMPWYVLDYY…ALSSLYKYLT (106 aa)). Positions 169 to 354 (AFLDYVDKEY…VNDEQKTALD (186 aa)) constitute a Tyr recombinase domain. Catalysis depends on residues R210, K234, H306, R309, and H332. Residue Y341 is the O-(3'-phospho-DNA)-tyrosine intermediate of the active site.

This sequence belongs to the 'phage' integrase family. XerS subfamily.

The protein localises to the cytoplasm. With respect to regulation, ftsK is required for recombination. Its function is as follows. Site-specific tyrosine recombinase, which acts by catalyzing the cutting and rejoining of the recombining DNA molecules. Essential to convert dimers of the bacterial chromosome into monomers to permit their segregation at cell division. This is Tyrosine recombinase XerS from Streptococcus pyogenes serotype M12 (strain MGAS9429).